A 223-amino-acid chain; its full sequence is MGQKGCPIGFRTGVTKKWRSLWYGNKQEFGKFLIEDVKIREFLRKKPSCQGAAGFVVRRMSGKIEVTIQTARPGLVIGKKGAEVDLLKEELRKLTGKEVWVEIAEIKRPELNAKLVADNIARQIERRVSFRRAMKKAMQSVMDAGAVGVKIQVSGRLAGAEIARSEWYKNGRVPLHTLRADIDYAAASAATTYGIIGVKVWINLGEKASTASSNVGTAAPVVQ.

A KH type-2 domain is found at Ile39–Ala117.

It belongs to the universal ribosomal protein uS3 family. As to quaternary structure, part of the 30S ribosomal subunit. Forms a tight complex with proteins S10 and S14.

In terms of biological role, binds the lower part of the 30S subunit head. Binds mRNA in the 70S ribosome, positioning it for translation. The sequence is that of Small ribosomal subunit protein uS3 from Chlamydia abortus (strain DSM 27085 / S26/3) (Chlamydophila abortus).